Reading from the N-terminus, the 682-residue chain is Pneumocandin biosynthesis cluster protein B (682 aa).

The span at 63–73 (SSLSSTEVTSS) shows a compositional bias: low complexity. 3 disordered regions span residues 63–86 (SSLS…DAPE), 107–129 (QNTP…DTNQ), and 251–358 (SEST…SPAN). Polar residues-rich tracts occupy residues 257–279 (NTGS…SHSS) and 310–320 (PRQTTEATPCD). A compositionally biased stretch (basic and acidic residues) spans 335 to 349 (PERRSMKMVRKEARD).

Part of the gene cluster that mediates the biosynthesis of pneumocandins, lipohexapeptides of the echinocandin family that prevent fungal cell wall formation by non-competitive inhibition of beta-1,3-glucan synthase. The 10,12-dimethylmyristoyl side chain is synthesized by the reducing polyketide synthase gloL/GLPKS4. The thioesterase gloN/GLHYD exclusively interacts with gloL/GLPKS4 to maintain turnover of the polyketide side chain. The 10R,12S-dimethylmyristic acid is then transferred to the first thiolation domain of the nonribosomal peptide synthetase gloA/GLNRPS4 by the acyl-AMP ligase gloD/GLligase, followed by its acylation to L-ornithine to trigger elongation of the cyclic hexapeptide. L-ornithine, 4R-hydroxyl-L-proline (generated from L-proline by the dioxygenase gloF/GLOXY2), 3S-hydroxyl-L-homotyrosine (generated by gloG/GLHtyB, gloH/GLHtyA, gloI/GLHtyC, gloJ/GLHtyD and hydroxylated at C-3 by the dioxygenase gloM/GLOXY1), 3R-hydroxyl-L-glutamine (generated from L-glutamine probably by the dioxygenase gloE/GLOXY3) and 3S-hydroxyl-L-proline (generated from L-proline by the dioxygenase gloF/GLOXY2 to yield pneumocandin B0), or 3S-hydroxyl-4S-methyl-L-proline (generated from L-leucine by the dioxygenase gloC/GLOXY4 to yield pneumocandin A0) are sequentially added to the growing chain. The last C domain of gloA/GLNRPS4 is proposed to be responsible for cyclization by condensation to form the peptide bond between L-ornithine and 3S-hydroxyl-4S-methyl-L-proline (for pneumocandin A0) or 3S-hydroxyl-L-proline (for pneumocandin B0). Finally, the subsequent C-4 hydroxylation of 3S-hydroxyl-L-homotyrosine and L-ornithine dihydroxylation at C-4 and C-5 are performed by the cytochrome P450 monooxygenases gloP/GLP450-1 and gloO/GLP450-2, respectively. The protein is Pneumocandin biosynthesis cluster protein B of Glarea lozoyensis (strain ATCC 20868 / MF5171).